The sequence spans 365 residues: Aminomethyltransferase (365 aa).

Belongs to the GcvT family. In terms of assembly, the glycine cleavage system is composed of four proteins: P, T, L and H.

The enzyme catalyses N(6)-[(R)-S(8)-aminomethyldihydrolipoyl]-L-lysyl-[protein] + (6S)-5,6,7,8-tetrahydrofolate = N(6)-[(R)-dihydrolipoyl]-L-lysyl-[protein] + (6R)-5,10-methylene-5,6,7,8-tetrahydrofolate + NH4(+). Its function is as follows. The glycine cleavage system catalyzes the degradation of glycine. This is Aminomethyltransferase from Erwinia tasmaniensis (strain DSM 17950 / CFBP 7177 / CIP 109463 / NCPPB 4357 / Et1/99).